Reading from the N-terminus, the 67-residue chain is MRIHYLLFALLFLFLVPVPGHGGIINTLQKYYCRVRGGRCAVLSCLPKEEQIGKCSTRGRKCCRRKK.

A signal peptide spans Met1–Gly22. Cystine bridges form between Cys33–Cys62, Cys40–Cys55, and Cys45–Cys63.

Highly expressed in skin and tonsils, and to a lesser extent in trachea, uterus, kidney, thymus, adenoid, pharynx and tongue. Low expression in salivary gland, bone marrow, colon, stomach, polyp and larynx. No expression in small intestine.

It is found in the secreted. Exhibits antimicrobial activity against Gram-positive bacteria S.aureus and S.pyogenes, Gram-negative bacteria P.aeruginosa and E.coli and the yeast C.albicans. Kills multiresistant S.aureus and vancomycin-resistant E.faecium. No significant hemolytic activity was observed. The protein is Beta-defensin 103 (DEFB103A) of Homo sapiens (Human).